Here is a 71-residue protein sequence, read N- to C-terminus: Heat-stable enterotoxin B (71 aa).

A signal peptide spans 1–19; sequence MKKIILALVLMLFSFCTLG. The propeptide occupies 20 to 52; that stretch reads QETASMHLDDTLSAPIAAEINRKACDTQTPSPS. Cystine bridges form between Cys-59–Cys-64, Cys-60–Cys-68, and Cys-63–Cys-71.

The protein belongs to the heat-stable enterotoxin family.

It is found in the secreted. In terms of biological role, toxin which activates the particulate form of guanylate cyclase and increases cyclic GMP levels within the host intestinal epithelial cells. Could play an important role in pathogenesis. This chain is Heat-stable enterotoxin B (ystB), found in Yersinia enterocolitica.